Here is a 304-residue protein sequence, read N- to C-terminus: GTPase Era (304 aa).

The 176-residue stretch at 11–186 (YCGFIAIVGR…LRKGVHHFPE (176 aa)) folds into the Era-type G domain. A G1 region spans residues 19-26 (GRPNVGKS). 19–26 (GRPNVGKS) is a GTP binding site. The tract at residues 45–49 (QTTRH) is G2. The tract at residues 66–69 (DTPG) is G3. GTP-binding positions include 66–70 (DTPGL) and 128–131 (NKVD). The G4 stretch occupies residues 128–131 (NKVD). Positions 158 to 160 (ISA) are G5. Residues 210–287 (TGEELPYSVT…HLELWVKVKS (78 aa)) enclose the KH type-2 domain.

The protein belongs to the TRAFAC class TrmE-Era-EngA-EngB-Septin-like GTPase superfamily. Era GTPase family. In terms of assembly, monomer.

The protein resides in the cytoplasm. It is found in the cell inner membrane. Functionally, an essential GTPase that binds both GDP and GTP, with rapid nucleotide exchange. Plays a role in 16S rRNA processing and 30S ribosomal subunit biogenesis and possibly also in cell cycle regulation and energy metabolism. The sequence is that of GTPase Era from Histophilus somni (strain 2336) (Haemophilus somnus).